The chain runs to 275 residues: Phosphonoacetaldehyde hydrolase (275 aa).

D15 acts as the Nucleophile in catalysis. D15 and A17 together coordinate Mg(2+). K56 acts as the Schiff-base intermediate with substrate in catalysis. D189 contributes to the Mg(2+) binding site.

The protein belongs to the HAD-like hydrolase superfamily. PhnX family. Homodimer. Mg(2+) is required as a cofactor.

The enzyme catalyses phosphonoacetaldehyde + H2O = acetaldehyde + phosphate + H(+). Its function is as follows. Involved in phosphonate degradation. This chain is Phosphonoacetaldehyde hydrolase, found in Pseudomonas entomophila (strain L48).